Reading from the N-terminus, the 760-residue chain is Cyclin-D-binding Myb-like transcription factor 1 (760 aa).

Residues 1-237 are interaction with CCND2; sequence MSTVEEDSDT…TPEEIEKLKE (237 aa). Residues 24 to 63 are disordered; it reads DTDGNLILHCPQNDPDEIDSEDSTEPPHKRLCLSSEDDQS. Over residues 37 to 47 the composition is skewed to acidic residues; the sequence is DPDEIDSEDST. Positions 87–170 are required for transcriptional activation; it reads VTMTATTEVA…IDILMNNIER (84 aa). Residues 87 to 458 form a required for DNA-binding region; sequence VTMTATTEVA…DNTAISPSPM (372 aa). The tract at residues 176 to 690 is interaction with CCND1, CCND2 and CCND3; that stretch reads GIKDATEIIF…PTIVHQVHQT (515 aa). In terms of domain architecture, Myb-like 1 spans 225-263; that stretch reads GKYTPEEIEKLKELRIKHGNDWATIGAALGRSASSVKDR. Residues 268–333 form the HTH myb-type domain; the sequence is KDTCNTGKWT…KWLNYLNWKQ (66 aa). Residues 306-329 constitute a DNA-binding region (H-T-H motif); it reads WAAVAERVGTRSEKQCRSKWLNYL. Residues 339 to 388 form the Myb-like 2 domain; the sequence is WTKEDEINLILRIAELDVADENDINWDLLAEGWSSVRSPQWLRSKWWTIK. The segment at 459–760 is required for transcriptional activation; it reads AALQIPVQIT…KDVEDLVNCH (302 aa). Disordered stretches follow at residues 593–614 and 738–760; these read DSDL…DTFP and IGSS…VNCH.

The protein belongs to the DMTF1 family. As to quaternary structure, interacts with the D-type cyclins CCND1, CCND2 and CCND3. Interaction with D-type cyclins may modulate transcriptional activation by this protein. Post-translationally, phosphorylated by the cyclin-D2/CDK4, cyclin-D3/CDK4 and cyclin-D2/CDK6 complexes and to a lesser extent by the cyclin-D1/CDK4 complex.

The protein resides in the nucleus. Its function is as follows. Transcriptional activator which activates the CDKN2A/ARF locus in response to Ras-Raf signaling, thereby promoting p53/TP53-dependent growth arrest. Binds to the consensus sequence 5'-CCCG[GT]ATGT-3'. The protein is Cyclin-D-binding Myb-like transcription factor 1 (Dmtf1) of Rattus norvegicus (Rat).